A 304-amino-acid polypeptide reads, in one-letter code: Nod factor export ATP-binding protein I (304 aa).

The region spanning 6 to 236 (IDFRNVEKRF…EIGCDVIEIY (231 aa)) is the ABC transporter domain. 38–45 (GPNGAGKT) lines the ATP pocket.

The protein belongs to the ABC transporter superfamily. Lipooligosaccharide exporter (TC 3.A.1.102) family. As to quaternary structure, the complex is composed of two ATP-binding proteins (NodI) and two transmembrane proteins (NodJ).

Its subcellular location is the cell inner membrane. Its function is as follows. Part of the ABC transporter complex NodIJ involved in the export of the nodulation factors (Nod factors), the bacterial signal molecules that induce symbiosis and subsequent nodulation induction. Nod factors are LCO (lipo-chitin oligosaccharide), a modified beta-1,4-linked N-acetylglucosamine oligosaccharide. This subunit is responsible for energy coupling to the transport system. The polypeptide is Nod factor export ATP-binding protein I (Burkholderia lata (strain ATCC 17760 / DSM 23089 / LMG 22485 / NCIMB 9086 / R18194 / 383)).